The chain runs to 173 residues: Protein FAM180A (173 aa).

Positions 1 to 17 (MSWKALTILLVFSSTQA) are cleaved as a signal peptide.

The protein belongs to the FAM180 family.

The protein resides in the secreted. The protein is Protein FAM180A (Fam180a) of Mus musculus (Mouse).